We begin with the raw amino-acid sequence, 222 residues long: Fibrillarin-like rRNA/tRNA 2'-O-methyltransferase (222 aa).

Residues 86-87, 104-105, 129-130, and 149-152 each bind S-adenosyl-L-methionine; these read TT, EV, DA, and DISQ.

The protein belongs to the methyltransferase superfamily. Fibrillarin family. Interacts with nop5. Component of box C/D small ribonucleoprotein (sRNP) particles that contain rpl7ae, FlpA and nop5, plus a guide RNA.

In terms of biological role, involved in pre-rRNA and tRNA processing. Utilizes the methyl donor S-adenosyl-L-methionine to catalyze the site-specific 2'-hydroxyl methylation of ribose moieties in rRNA and tRNA. Site specificity is provided by a guide RNA that base pairs with the substrate. Methylation occurs at a characteristic distance from the sequence involved in base pairing with the guide RNA. In Thermoplasma volcanium (strain ATCC 51530 / DSM 4299 / JCM 9571 / NBRC 15438 / GSS1), this protein is Fibrillarin-like rRNA/tRNA 2'-O-methyltransferase.